A 252-amino-acid polypeptide reads, in one-letter code: ATP synthase subunit a (252 aa).

The next 5 membrane-spanning stretches (helical) occupy residues 33–53 (GQVFITTWFVMALLIAVAFVA), 92–112 (VPFVGTLFLFIFVCNWSGALV), 130–150 (DINTTVALALLVSLAYFYAGL), 196–216 (LVVSVLVLLVPLFVPLPVMVL), and 217–237 (GLFTSAIQALVFATLAATYIG).

The protein belongs to the ATPase A chain family. As to quaternary structure, F-type ATPases have 2 components, CF(1) - the catalytic core - and CF(0) - the membrane proton channel. CF(1) has five subunits: alpha(3), beta(3), gamma(1), delta(1), epsilon(1). CF(0) has four main subunits: a, b, b' and c.

The protein resides in the cellular thylakoid membrane. Functionally, key component of the proton channel; it plays a direct role in the translocation of protons across the membrane. This is ATP synthase subunit a from Thermosynechococcus vestitus (strain NIES-2133 / IAM M-273 / BP-1).